Consider the following 133-residue polypeptide: Large ribosomal subunit protein bL17 (133 aa).

It belongs to the bacterial ribosomal protein bL17 family. As to quaternary structure, part of the 50S ribosomal subunit. Contacts protein L32.

The polypeptide is Large ribosomal subunit protein bL17 (Nitratidesulfovibrio vulgaris (strain DSM 19637 / Miyazaki F) (Desulfovibrio vulgaris)).